A 191-amino-acid chain; its full sequence is Large ribosomal subunit protein bL12cz (191 aa).

The transit peptide at 1-58 directs the protein to the chloroplast; it reads MASTTLSIATTIRSSSYPTLASINHFPSRTTTIEFPSRFGGGSSSTLTHRATHLRPIA.

This sequence belongs to the bacterial ribosomal protein bL12 family.

The protein resides in the plastid. The protein localises to the chloroplast. The sequence is that of Large ribosomal subunit protein bL12cz (RPL12A) from Arabidopsis thaliana (Mouse-ear cress).